We begin with the raw amino-acid sequence, 243 residues long: uncharacterized protein (243 aa).

Transmembrane regions (helical) follow at residues 38–58 (AYFL…VGIF), 99–119 (FGIA…FLGY), 143–163 (FYFS…FLVL), and 204–224 (AFAT…LGLF).

The protein resides in the cell membrane. This is an uncharacterized protein from Mycoplasma pneumoniae (strain ATCC 29342 / M129 / Subtype 1) (Mycoplasmoides pneumoniae).